Reading from the N-terminus, the 401-residue chain is 8-amino-7-oxononanoate synthase (401 aa).

R19 is a substrate binding site. 106-107 (GY) is a pyridoxal 5'-phosphate binding site. Residue H131 coordinates substrate. The pyridoxal 5'-phosphate site is built by S176, H204, and T233. An N6-(pyridoxal phosphate)lysine modification is found at K236. T350 contacts substrate.

This sequence belongs to the class-II pyridoxal-phosphate-dependent aminotransferase family. BioF subfamily. As to quaternary structure, homodimer. Pyridoxal 5'-phosphate is required as a cofactor.

It carries out the reaction 6-carboxyhexanoyl-[ACP] + L-alanine + H(+) = (8S)-8-amino-7-oxononanoate + holo-[ACP] + CO2. It functions in the pathway cofactor biosynthesis; biotin biosynthesis. Functionally, catalyzes the decarboxylative condensation of pimeloyl-[acyl-carrier protein] and L-alanine to produce 8-amino-7-oxononanoate (AON), [acyl-carrier protein], and carbon dioxide. This is 8-amino-7-oxononanoate synthase from Pseudomonas aeruginosa (strain ATCC 15692 / DSM 22644 / CIP 104116 / JCM 14847 / LMG 12228 / 1C / PRS 101 / PAO1).